The sequence spans 252 residues: Undecaprenyl-diphosphatase (252 aa).

7 consecutive transmembrane segments (helical) span residues 1 to 21 (MTTL…FLPI), 42 to 62 (HKAF…FLYF), 74 to 94 (ILIA…IIKS), 95 to 115 (LFNP…LILI), 172 to 192 (AAEF…FYDV), 206 to 226 (NLIV…KWLL), and 232 to 252 (HSFI…YLWY).

This sequence belongs to the UppP family.

The protein localises to the cell inner membrane. It catalyses the reaction di-trans,octa-cis-undecaprenyl diphosphate + H2O = di-trans,octa-cis-undecaprenyl phosphate + phosphate + H(+). Its function is as follows. Catalyzes the dephosphorylation of undecaprenyl diphosphate (UPP). Confers resistance to bacitracin. The chain is Undecaprenyl-diphosphatase from Sulfurihydrogenibium sp. (strain YO3AOP1).